The sequence spans 105 residues: MRRIKKGDQVIVIAGKDKGKKGLVLSVLSGDKLVVEGVNLVRKHQRPNPMRGVTGGIVEKAMPIHSSNVALFNAAINKGDRVGFRLLADGRKVRFYRSTNELIDA.

The protein belongs to the universal ribosomal protein uL24 family. Part of the 50S ribosomal subunit.

Its function is as follows. One of two assembly initiator proteins, it binds directly to the 5'-end of the 23S rRNA, where it nucleates assembly of the 50S subunit. One of the proteins that surrounds the polypeptide exit tunnel on the outside of the subunit. The sequence is that of Large ribosomal subunit protein uL24 from Methylococcus capsulatus (strain ATCC 33009 / NCIMB 11132 / Bath).